The following is a 428-amino-acid chain: Spliceosome RNA helicase DDX39B (428 aa).

A compositionally biased stretch (acidic residues) spans 1–19 (MAENDVDNELLDYEDDEVE). Positions 1–31 (MAENDVDNELLDYEDDEVETAAGGDGAEAPA) are disordered. A2 carries the post-translational modification N-acetylalanine. K36 carries the post-translational modification N6-acetyllysine; alternate. K36 is covalently cross-linked (Glycyl lysine isopeptide (Lys-Gly) (interchain with G-Cter in SUMO2); alternate). Phosphoserine is present on residues S38 and S41. The Q motif motif lies at 45 to 73 (SGFRDFLLKPELLRAIVDCGFEHPSEVQH). A Helicase ATP-binding domain is found at 76–249 (IPQAILGMDV…RKFMQDPMEI (174 aa)). Position 89-96 (89-96 (AKSGMGKT)) interacts with ATP. T172 is modified (phosphothreonine). The DECD box motif lies at 196–199 (DECD). One can recognise a Helicase C-terminal domain in the interval 261-422 (GLQQYYVKLK…ELPDEIDISS (162 aa)).

Belongs to the DEAD box helicase family. DECD subfamily. As to quaternary structure, homodimer, and heterodimer with DDX39A. DDX39B interacts with the THO subcomplex to form the THO-DDX39B complex which multimerizes into a 28-subunit tetrameric assembly. Component of the transcription/export (TREX) complex at least composed of ALYREF/THOC4, DDX39B, SARNP/CIP29, CHTOP and the THO subcomplex; in the complex interacts with THOC2. THOC1-THOC2-THOC3-DDX39B subcomplex is sufficient for the interaction with export factor NXF1-NXT1. TREX seems to have a dynamic structure involving ATP-dependent remodeling. Within the TREX complex bridges ALYREF/THOC4 and the THO subcomplex, and, in a ATP-dependent manner, ALYREF/THOC4 and SARNP/CIP29. Component of the spliceosome. Interacts directly with U2AF2. Interacts with RBM8A, RNPS1 and SRRM1, FYTTD1/UIF, THOC1, MX1 and POLDIP3. Interacts with LUZP4. Interacts with SARNP/CIP29 (via the C-terminal domain); the interaction is direct and facilitates RNA binding of DDX39B. (Microbial infection) Interacts with human cytomegalovirus/HHV-5 protein UL69.

The protein localises to the nucleus. It is found in the nucleus speckle. The protein resides in the cytoplasm. It catalyses the reaction ATP + H2O = ADP + phosphate + H(+). Involved in nuclear export of spliced and unspliced mRNA. Component of the TREX complex which is thought to couple mRNA transcription, processing and nuclear export, and specifically associates with spliced mRNA and not with unspliced pre-mRNA. The TREX complex is recruited to spliced mRNAs by a transcription-independent mechanism, binds to mRNA upstream of the exon-junction complex (EJC) and is recruited in a splicing- and cap-dependent manner to a region near the 5' end of the mRNA where it functions in mRNA export to the cytoplasm via the TAP/NXF1 pathway. The THOC1-THOC2-THOC3 core complex alone is sufficient to promote ATPase activity of DDX39B; in the complex THOC2 is the only component that directly interacts with DDX39B. Associates with SARNP/CIP29, which facilitates RNA binding of DDX39B and likely plays a role in mRNA export. May undergo several rounds of ATP hydrolysis during assembly of TREX to drive subsequent loading of components such as ALYREF/THOC4 and CHTOP onto mRNA. Also associates with pre-mRNA independent of ALYREF/THOC4. Involved in the nuclear export of intronless mRNA; the ATP-bound form is proposed to recruit export adapter ALYREF/THOC4 to intronless mRNA; its ATPase activity is cooperatively stimulated by RNA and ALYREF/THOC4 and ATP hydrolysis is thought to trigger the dissociation from RNA to allow the association of ALYREF/THOC4 and the NXF1-NXT1 heterodimer. Involved in transcription elongation and genome stability. In terms of biological role, splice factor that is required for the first ATP-dependent step in spliceosome assembly and for the interaction of U2 snRNP with the branchpoint. Has both RNA-stimulated ATP binding/hydrolysis activity and ATP-dependent RNA unwinding activity. Even with the stimulation of RNA, the ATPase activity is weak. Can only hydrolyze ATP but not other NTPs. The RNA stimulation of ATPase activity does not have a strong preference for the sequence and length of the RNA. However, ssRNA stimulates the ATPase activity much more strongly than dsRNA. Can unwind 5' or 3' overhangs or blunt end RNA duplexes in vitro. The ATPase and helicase activities are not influenced by U2AF2; the effect of ALYREF/THOC4 is reported conflictingly with [PubMed:23299939] reporting a stimulatory effect. Its function is as follows. (Microbial infection) The TREX complex is essential for the export of Kaposi's sarcoma-associated herpesvirus (KSHV) intronless mRNAs and infectious virus production. This Homo sapiens (Human) protein is Spliceosome RNA helicase DDX39B.